The sequence spans 600 residues: Threonine dehydratase, mitochondrial (600 aa).

Lysine 144 bears the N6-(pyridoxal phosphate)lysine mark. 2 consecutive ACT-like domains span residues 425–497 and 519–590; these read VFLS…DISD and RLYR…DETN.

It belongs to the serine/threonine dehydratase family. As to quaternary structure, homotetramer. Pyridoxal 5'-phosphate serves as cofactor.

The protein localises to the mitochondrion. The protein resides in the cytoplasm. The enzyme catalyses L-threonine = 2-oxobutanoate + NH4(+). It functions in the pathway amino-acid biosynthesis; L-isoleucine biosynthesis; 2-oxobutanoate from L-threonine: step 1/1. Its activity is regulated as follows. Isoleucine allosterically inhibits while valine allosterically activates this enzyme. The chain is Threonine dehydratase, mitochondrial from Schizosaccharomyces pombe (strain 972 / ATCC 24843) (Fission yeast).